The chain runs to 790 residues: GATOR2 complex protein WDR24 (790 aa).

WD repeat units follow at residues 72 to 112, 118 to 158, 161 to 201, 205 to 245, 249 to 291, and 295 to 338; these read SLNL…RNKQ, EHKR…SVST, GQSE…RCER, AHNG…AKEM, QTIA…VPAA, and EHRD…VERA. Serine 155 carries the post-translational modification Phosphoserine; by AMPK. Serine 470 and serine 496 each carry phosphoserine. Threonine 581 carries the phosphothreonine modification. 2 positions are modified to phosphoserine: serine 594 and serine 598. A C4-type zinc finger spans residues 718 to 740; the sequence is NCSHCKRPMSSRGWVCDRCHRCA. Zn(2+) contacts are provided by cysteine 719, cysteine 722, cysteine 733, cysteine 736, cysteine 743, cysteine 746, cysteine 757, cysteine 760, histidine 762, histidine 765, histidine 768, cysteine 779, cysteine 783, histidine 785, and cysteine 787. Residues 741-790 form an RING-type; atypical zinc finger; that stretch reads SMCAVCHHVVKGLFVWCQGCSHGGHLQHIMKWLEGSSHCPAGCGHLCEYS.

The protein belongs to the WD repeat WDR24 family. As to quaternary structure, component of the GATOR2 subcomplex, composed of MIOS, SEC13, SEH1L, WDR24 and WDR59. The GATOR2 complex interacts with CASTOR1 and CASTOR2; the interaction is negatively regulated by arginine. The GATOR2 complex interacts with SESN1, SESN2 and SESN3; the interaction is negatively regulated by amino acids. SESN1, SESN2 and SESN3 convey leucine availability via direct interaction with SEH1L and WDR24. In terms of processing, phosphorylation at Ser-155 by AMPK in response to glucose deprivation inactivates WDR24 by promoting interaction with 14-3-3 proteins, such as YWHAG, preventing assembly of the GATOR2 complex. Autoubiquitinated; MIOS is required to prevent autoubiquitination.

It localises to the lysosome membrane. The enzyme catalyses S-ubiquitinyl-[E2 ubiquitin-conjugating enzyme]-L-cysteine + [acceptor protein]-L-lysine = [E2 ubiquitin-conjugating enzyme]-L-cysteine + N(6)-ubiquitinyl-[acceptor protein]-L-lysine.. It functions in the pathway protein modification; protein ubiquitination. Its activity is regulated as follows. The GATOR2 complex is negatively regulated by the upstream amino acid sensors CASTOR1 and SESN2, which sequester the GATOR2 complex in absence of amino acids. In the presence of abundant amino acids, GATOR2 is released from CASTOR1 and SESN2 and activated. Its function is as follows. Catalytic component of the GATOR2 complex, a multiprotein complex that acts as an activator of the amino acid-sensing branch of the mTORC1 signaling pathway. The GATOR2 complex indirectly activates mTORC1 through the inhibition of the GATOR1 subcomplex. GATOR2 probably acts as an E3 ubiquitin-protein ligase toward GATOR1. In the presence of abundant amino acids, the GATOR2 complex mediates ubiquitination of the NPRL2 core component of the GATOR1 complex, leading to GATOR1 inactivation. In the absence of amino acids, GATOR2 is inhibited, activating the GATOR1 complex. In addition to its role in regulation of the mTORC1 complex, promotes the acidification of lysosomes and facilitates autophagic flux. Within the GATOR2 complex, WDR24 constitutes the catalytic subunit that mediates 'Lys-6'-linked ubiquitination of NPRL2. The protein is GATOR2 complex protein WDR24 of Homo sapiens (Human).